The primary structure comprises 97 residues: Stefin-1 (97 aa).

The short motif at 46 to 50 is the Secondary area of contact element; that stretch reads QVVAG.

It belongs to the cystatin family.

It is found in the cytoplasm. In terms of biological role, this is an intracellular thiol proteinase inhibitor. This Mus musculus (Mouse) protein is Stefin-1 (Stfa1).